The chain runs to 520 residues: Cation efflux system protein CzcB (520 aa).

The disordered stretch occupies residues 28–85; it reads SGRSAPEEQGGHSESKGHGDTEHHGKQAAEADHKDDKSHGDGEHHEVKKGPNGGALFS. The span at 32-76 shows a compositional bias: basic and acidic residues; that stretch reads APEEQGGHSESKGHGDTEHHGKQAAEADHKDDKSHGDGEHHEVKK.

The protein belongs to the membrane fusion protein (MFP) (TC 8.A.1) family.

In terms of biological role, czcA and CzcB together would act in zinc efflux nearly as effectively as the complete czc efflux system (CzcABC). The CzcB protein is thought to funnel zinc cations to the CzcA transport protein. In Alcaligenes sp. (strain CT14), this protein is Cation efflux system protein CzcB (czcB).